Here is a 1185-residue protein sequence, read N- to C-terminus: DNA-directed RNA polymerase subunit beta' (1185 aa).

Residues Cys67, Cys69, Cys82, and Cys85 each coordinate Zn(2+). 3 residues coordinate Mg(2+): Asp457, Asp459, and Asp461. Zn(2+) is bound by residues Cys802, Cys876, Cys883, and Cys886.

The protein belongs to the RNA polymerase beta' chain family. As to quaternary structure, the RNAP catalytic core consists of 2 alpha, 1 beta, 1 beta' and 1 omega subunit. When a sigma factor is associated with the core the holoenzyme is formed, which can initiate transcription. It depends on Mg(2+) as a cofactor. Requires Zn(2+) as cofactor.

The enzyme catalyses RNA(n) + a ribonucleoside 5'-triphosphate = RNA(n+1) + diphosphate. Its function is as follows. DNA-dependent RNA polymerase catalyzes the transcription of DNA into RNA using the four ribonucleoside triphosphates as substrates. In Clostridium novyi (strain NT), this protein is DNA-directed RNA polymerase subunit beta'.